The chain runs to 140 residues: Ribosome maturation factor RimP (140 aa).

It belongs to the RimP family.

It localises to the cytoplasm. In terms of biological role, required for maturation of 30S ribosomal subunits. This chain is Ribosome maturation factor RimP, found in Campylobacter hominis (strain ATCC BAA-381 / DSM 21671 / CCUG 45161 / LMG 19568 / NCTC 13146 / CH001A).